Reading from the N-terminus, the 116-residue chain is Large ribosomal subunit protein bL19 (116 aa).

It belongs to the bacterial ribosomal protein bL19 family.

This protein is located at the 30S-50S ribosomal subunit interface and may play a role in the structure and function of the aminoacyl-tRNA binding site. The protein is Large ribosomal subunit protein bL19 of Blochmanniella pennsylvanica (strain BPEN).